The sequence spans 1108 residues: Eukaryotic translation initiation factor 2-alpha kinase 3 (1108 aa).

An N-terminal signal peptide occupies residues 1 to 27 (MERATQPRPRALLLLFLLLGCAAGISA). The Lumenal portion of the chain corresponds to 28–506 (VARARSLLAP…HYSKNIRKKD (479 aa)). Residues 71-92 (EALPAASGEQESRATESDDDVE) are disordered. N-linked (GlcNAc...) asparagine glycosylation is present at Asn253. Residues 507–527 (PILLLHWWKEIFGTILLCIVA) traverse the membrane as a helical segment. The Cytoplasmic segment spans residues 528 to 1108 (TTFIVRRLFH…SSTFSPLPGN (581 aa)). Residues 542–563 (RQRKESETQCQTESKYDSVSAD) form a disordered region. Positions 585 to 1069 (FEPIQCMGRG…ATDIIENAVF (485 aa)) constitute a Protein kinase domain. Residue 591-599 (MGRGGFGVV) coordinates ATP. Tyr611 is subject to Phosphotyrosine; by autocatalysis. Position 614 (Lys614) interacts with ATP. The segment at 639 to 880 (EHPGIVRYFN…SPKVYLYIQM (242 aa)) is insert loop. Ser707 carries the phosphoserine modification. 2 disordered regions span residues 772 to 818 (DEGH…RMNR) and 832 to 856 (FKHSSSRSSSEATLSTSPTRPTTLS). Residues 785-798 (SPYTRSREGTSSSI) are compositionally biased toward polar residues. Thr794 carries the post-translational modification Phosphothreonine. Positions 837 to 856 (SRSSSEATLSTSPTRPTTLS) are enriched in low complexity. Asp929 functions as the Proton acceptor in the catalytic mechanism. The residue at position 974 (Thr974) is a Phosphothreonine. The disordered stretch occupies residues 1080-1108 (LRQRSRSLSSSGTKHSRQPSSTFSPLPGN). Ser1086 is subject to Phosphoserine. Over residues 1097-1108 (QPSSTFSPLPGN) the composition is skewed to polar residues.

This sequence belongs to the protein kinase superfamily. Ser/Thr protein kinase family. GCN2 subfamily. Forms dimers with HSPA5/BIP in resting cells. Homotetramerizes in response to endoplasmic reticulum (ER) stress, leading to its activation. Interacts with HSP90B1/GRP94. Interacts with DNAJC3; inhibiting EIF2AK3/PERK activity. Interacts with ATAD3A; ATAD3A and EIF2S1/eIF-2-alpha occupy a common binding site within the cytoplasmic loop of EIF2AK3/PERK, leading to prevent EIF2AK3/PERK association with its substrate EIF2S1/eIF-2-alpha. Interacts with MFN2. Interacts with TMEM33. Interacts with PDIA6. Interacts with LACC1. In terms of processing, oligomerization of the N-terminal ER luminal domain by ER stress promotes EIF2AK3/PERK trans-autophosphorylation of the C-terminal cytoplasmic kinase domain at multiple residues including Thr-974 on the kinase activation loop. Autophosphorylated at Tyr-611 following endoplasmic reticulum stress, leading to activate its activity. Dephosphorylated at Tyr-611 by PTPN1/PTP1B, leading to inactivate its enzyme activity. Phosphorylation at Thr-794 by AKT (AKT1, AKT2 and/or AKT3) inactivates EIF2AK3/PERK. Post-translationally, ADP-ribosylated by PARP16 upon ER stress, which increases kinase activity. Ubiquitous.

The protein localises to the endoplasmic reticulum membrane. It catalyses the reaction L-seryl-[protein] + ATP = O-phospho-L-seryl-[protein] + ADP + H(+). The enzyme catalyses L-threonyl-[protein] + ATP = O-phospho-L-threonyl-[protein] + ADP + H(+). The catalysed reaction is L-tyrosyl-[protein] + ATP = O-phospho-L-tyrosyl-[protein] + ADP + H(+). Its activity is regulated as follows. Inhibited by HSPA5/BIP in absence of stress. Perturbation in protein folding in the endoplasmic reticulum (ER) promotes reversible dissociation from HSPA5/BIP and oligomerization, resulting in trans-autophosphorylation and kinase activity induction. Inactivated following phosphorylation at Thr-794 by AKT (AKT1, AKT2 and/or AKT3). Inhibited by ATAD3A at mitochondria-endoplasmic reticulum contact sites, providing a safe haven for mitochondrial protein translation during ER stress. Its function is as follows. Metabolic-stress sensing protein kinase that phosphorylates the alpha subunit of eukaryotic translation initiation factor 2 (EIF2S1/eIF-2-alpha) in response to various stress, such as unfolded protein response (UPR). Key effector of the integrated stress response (ISR) to unfolded proteins: EIF2AK3/PERK specifically recognizes and binds misfolded proteins, leading to its activation and EIF2S1/eIF-2-alpha phosphorylation. EIF2S1/eIF-2-alpha phosphorylation in response to stress converts EIF2S1/eIF-2-alpha in a global protein synthesis inhibitor, leading to a global attenuation of cap-dependent translation, while concomitantly initiating the preferential translation of ISR-specific mRNAs, such as the transcriptional activators ATF4 and QRICH1, and hence allowing ATF4- and QRICH1-mediated reprogramming. The EIF2AK3/PERK-mediated unfolded protein response increases mitochondrial oxidative phosphorylation by promoting ATF4-mediated expression of COX7A2L/SCAF1, thereby increasing formation of respiratory chain supercomplexes. In contrast to most subcellular compartments, mitochondria are protected from the EIF2AK3/PERK-mediated unfolded protein response due to EIF2AK3/PERK inhibition by ATAD3A at mitochondria-endoplasmic reticulum contact sites. In addition to EIF2S1/eIF-2-alpha, also phosphorylates NFE2L2/NRF2 in response to stress, promoting release of NFE2L2/NRF2 from the BCR(KEAP1) complex, leading to nuclear accumulation and activation of NFE2L2/NRF2. Serves as a critical effector of unfolded protein response (UPR)-induced G1 growth arrest due to the loss of cyclin-D1 (CCND1). Involved in control of mitochondrial morphology and function. The polypeptide is Eukaryotic translation initiation factor 2-alpha kinase 3 (Eif2ak3) (Rattus norvegicus (Rat)).